Consider the following 202-residue polypeptide: Protein-methionine-sulfoxide reductase heme-binding subunit MsrQ (202 aa).

Transmembrane regions (helical) follow at residues 8–28 (LAVFLGALAVPAWWLYQAWIF), 42–62 (LGLGALVLLLLTLAMTPLQKL), 75–95 (LGLWCFTYVLLHLSAYCVFIL), 110–130 (PYIIVGMLGFICLFLLAITSN), 147–167 (LVYLILGLGLLHMLWVVRADL), and 169–189 (EWTLYAVVGASLMLLRLPSIA).

It belongs to the MsrQ family. As to quaternary structure, heterodimer of a catalytic subunit (MsrP) and a heme-binding subunit (MsrQ). It depends on FMN as a cofactor. Heme b is required as a cofactor.

It localises to the cell inner membrane. Its function is as follows. Part of the MsrPQ system that repairs oxidized periplasmic proteins containing methionine sulfoxide residues (Met-O), using respiratory chain electrons. Thus protects these proteins from oxidative-stress damage caused by reactive species of oxygen and chlorine generated by the host defense mechanisms. MsrPQ is essential for the maintenance of envelope integrity under bleach stress, rescuing a wide series of structurally unrelated periplasmic proteins from methionine oxidation. MsrQ provides electrons for reduction to the reductase catalytic subunit MsrP, using the quinone pool of the respiratory chain. The chain is Protein-methionine-sulfoxide reductase heme-binding subunit MsrQ from Pseudomonas aeruginosa (strain LESB58).